The chain runs to 332 residues: Beta-ketoacyl-[acyl-carrier-protein] synthase III (332 aa).

Residues C112 and H252 contribute to the active site. An ACP-binding region spans residues 253-257; it reads QANLR. N282 is a catalytic residue.

This sequence belongs to the thiolase-like superfamily. FabH family. In terms of assembly, homodimer.

Its subcellular location is the cytoplasm. The enzyme catalyses malonyl-[ACP] + acetyl-CoA + H(+) = 3-oxobutanoyl-[ACP] + CO2 + CoA. Its pathway is lipid metabolism; fatty acid biosynthesis. Its function is as follows. Catalyzes the condensation reaction of fatty acid synthesis by the addition to an acyl acceptor of two carbons from malonyl-ACP. Catalyzes the first condensation reaction which initiates fatty acid synthesis and may therefore play a role in governing the total rate of fatty acid production. Possesses both acetoacetyl-ACP synthase and acetyl transacylase activities. Its substrate specificity determines the biosynthesis of branched-chain and/or straight-chain of fatty acids. In Syntrophomonas wolfei subsp. wolfei (strain DSM 2245B / Goettingen), this protein is Beta-ketoacyl-[acyl-carrier-protein] synthase III.